The following is a 629-amino-acid chain: Serine/threonine-protein kinase ICK (629 aa).

The 281-residue stretch at 4 to 284 folds into the Protein kinase domain; that stretch reads YTTIKQLGDG…ASQALRYPYF (281 aa). Residues 10–18 and K33 each bind ATP; that span reads LGDGTYGSV. The Proton acceptor role is filled by D125. T157 carries the post-translational modification Phosphothreonine; by CDK7. At Y159 the chain carries Phosphotyrosine. S161 carries the phosphoserine modification. 3 disordered regions span residues 292-376, 455-483, and 581-629; these read IISK…SLHN, SESV…SSAK, and SSLK…PSRR. Basic and acidic residues predominate over residues 296–306; that stretch reads DSGKPQREVQD. Residues 309-321 are compositionally biased toward pro residues; the sequence is GPPPYIKPAPPAQ. 2 stretches are compositionally biased toward low complexity: residues 322 to 344 and 457 to 470; these read APAK…PQHS and SVGT…QASS.

It belongs to the protein kinase superfamily. CMGC Ser/Thr protein kinase family. CDC2/CDKX subfamily. Mg(2+) serves as cofactor. Post-translationally, autophosphorylated on serine and threonine residues. Phosphorylation at Thr-157 by CDK7/Cak1p increases kinase activity. As to expression, highly expressed in colon and lung, lower levels present in heart, esophagus, stomach, small intestine and ovary. Localizes to the crypt region of large and small intestine.

The protein resides in the cytoplasm. It localises to the cytosol. The protein localises to the cell projection. Its subcellular location is the cilium. It is found in the nucleus. The protein resides in the cytoskeleton. It localises to the cilium basal body. It catalyses the reaction L-seryl-[protein] + ATP = O-phospho-L-seryl-[protein] + ADP + H(+). The enzyme catalyses L-threonyl-[protein] + ATP = O-phospho-L-threonyl-[protein] + ADP + H(+). Its function is as follows. Has an essential role in ciliogenesis, particularly in neuronal and retinal progenitor cells. Phosphorylates KIF3A. Involved in the control of ciliary length. Regulates the ciliary localization of SHH pathway components as well as the localization of IFT components at ciliary tips. May play a role in cardiac development. Regulates intraflagellar transport (IFT) speed and negatively regulates cilium length in a cAMP and mTORC1 signaling -dependent manner and this regulation requires its kinase activity. The chain is Serine/threonine-protein kinase ICK (Cilk1) from Mus musculus (Mouse).